Reading from the N-terminus, the 416-residue chain is 5-hydroxytryptamine receptor 1A-beta (416 aa).

The Extracellular portion of the chain corresponds to 1–35 (MEGTNNTTGWTHFDSTSNRTSKSFDEEVKLSYQVV). Asn5, Asn6, and Asn18 each carry an N-linked (GlcNAc...) asparagine glycan. The chain crosses the membrane as a helical span at residues 36 to 56 (TSFLLGALILCSIFGNACVVA). Over 57 to 70 (AIALERSLQNVANY) the chain is Cytoplasmic. The helical transmembrane segment at 71-95 (LIGSLAVTDLMVSVLVLPMAALYQV) threads the bilayer. The Extracellular segment spans residues 96–104 (LNRWTLGQI). The helical transmembrane segment at 105 to 129 (PCDIFISLDMLCCTSSILHLCVIAL) threads the bilayer. Cys106 and Cys189 are joined by a disulfide. Asp113 and Cys117 together coordinate serotonin. Positions 130 to 132 (DRY) match the DRY motif; important for ligand-induced conformation changes motif. Topologically, residues 130–149 (DRYWAITEPIDYMKKRTPRR) are cytoplasmic. Residues 150–171 (AAVLISVTWLVGFSISIPPMLI) form a helical membrane-spanning segment. Topologically, residues 172–195 (MRSQPSSMAEDRANSKQCKITQDP) are extracellular. The chain crosses the membrane as a helical span at residues 196–218 (WYTIYSTFGAFYIPLTLMLVLYG). Over 219–340 (RIFKAARFRI…LARERKTVKT (122 aa)) the chain is Cytoplasmic. Residues Lys339, Thr340, and Gly346 each contribute to the 1D-myo-inositol 4-phosphate site. Residues 341–364 (LGIIMGTFILCWLPFFIVALVMPF) traverse the membrane as a helical segment. Topologically, residues 365 to 372 (CQESCFMP) are extracellular. The helical transmembrane segment at 373–397 (HWLKDVINWLGYSNSLLNPIIYAYF) threads the bilayer. An NPxxY motif; important for ligand-induced conformation changes and signaling motif is present at residues 390-394 (NPIIY). Residues Phe397, Asn398, and Lys399 each contribute to the 1D-myo-inositol 4-phosphate site. Topologically, residues 398-416 (NKDFQSAFKKIIKCHFCRA) are cytoplasmic.

Belongs to the G-protein coupled receptor 1 family. 5-hydroxytryptamine receptor subfamily.

The protein resides in the cell membrane. With respect to regulation, G-protein coupled receptor activity is regulated by lipids: phosphatidylinositol 4-phosphate increases HTR1A-mediated activity. Functionally, G-protein coupled receptor for 5-hydroxytryptamine (serotonin). Also functions as a receptor for various drugs and psychoactive substances. Ligand binding causes a conformation change that triggers signaling via guanine nucleotide-binding proteins (G proteins) and modulates the activity of downstream effectors, such as adenylate cyclase. HTR1A is coupled to G(i)/G(o) G alpha proteins and mediates inhibitory neurotransmission: signaling inhibits adenylate cyclase activity and activates a phosphatidylinositol-calcium second messenger system that regulates the release of Ca(2+) ions from intracellular stores. Beta-arrestin family members regulate signaling by mediating both receptor desensitization and resensitization processes. This Takifugu rubripes (Japanese pufferfish) protein is 5-hydroxytryptamine receptor 1A-beta (htr1a-B).